We begin with the raw amino-acid sequence, 306 residues long: tRNA dimethylallyltransferase 1 (306 aa).

ATP is bound at residue 13–20 (GPTASGKT). Substrate is bound at residue 15–20 (TASGKT). Residues 38–41 (DSRQ) are interaction with substrate tRNA.

This sequence belongs to the IPP transferase family. As to quaternary structure, monomer. The cofactor is Mg(2+).

The catalysed reaction is adenosine(37) in tRNA + dimethylallyl diphosphate = N(6)-dimethylallyladenosine(37) in tRNA + diphosphate. Its function is as follows. Catalyzes the transfer of a dimethylallyl group onto the adenine at position 37 in tRNAs that read codons beginning with uridine, leading to the formation of N6-(dimethylallyl)adenosine (i(6)A). In Azobacteroides pseudotrichonymphae genomovar. CFP2, this protein is tRNA dimethylallyltransferase 1.